The primary structure comprises 68 residues: Tau-scoloptoxin(04)-Ssm1b (68 aa).

The signal sequence occupies residues 1–25; that stretch reads MLKSFCILSVFMVLFLAKFPDLCSG. Positions 26–36 are excised as a propeptide; it reads EEISPLKIVVR. Intrachain disulfides connect C45-C56 and C50-C63. Residues 55 to 67 are highly charged C-terminal region, binds to TRPV1 channel; sequence RCSIVDKQCIKKE.

The protein belongs to the scoloptoxin-04 family. In terms of tissue distribution, expressed by the venom gland.

Its subcellular location is the secreted. Extremely potent agonist and potentiator of TRPV1 (EC(50)=470-521.5 nM (mouse)). It strongly promotes the heat activation process by downshifting the activation threshold temperature. It preferably binds to the activated channel and promotes its opening. Holding the channel closed by cooling prevents binding of this toxin, leaving it ineffective. The toxin binds to the charge-rich outer pore region of the channel where it directly interacts with the pore helix and turret, two adjacent structural elements known to be critical for activation gating of TRPV1. In comparison with Sm1b, induces a TRPV1 desensitization with slower kinetics (20 seconds). In vivo, induces pain in mice after intraplantar injection. In terms of biological role, potent agonist and probable potentiator of TRPV1 (EC(50)=38.35 uM (mouse)). Also binds to the outer pore region of TRPV1. In comparison with Sm1a, induces a TRPV1 desensitization with faster kinetics (2 seconds) and leads to a more complete TRPV1 desensitization. Desensitization is achieved by reducing both the open probability and the single-channel conductance upon prolonged exposure. This chain is Tau-scoloptoxin(04)-Ssm1b, found in Scolopendra mutilans (Chinese red-headed centipede).